We begin with the raw amino-acid sequence, 247 residues long: LHFPL tetraspan subfamily member 4 protein (247 aa).

The next 4 membrane-spanning stretches (helical) occupy residues 22 to 42, 97 to 117, 127 to 147, and 178 to 198; these read IGVL…VVFI, FFVL…ALFF, ICAW…MIFP, and ILAI…FVLG.

It belongs to the LHFP family. In terms of assembly, interacts with GABA(A) receptor subunits. Interacts with GABRB3. Interacts with GABRA2. Interacts with GABRG2. Identified in a complex of 720 kDa composed of LHFPL4, NLGN2, GABRA1, GABRB2, GABRG2 and GABRB3. Interacts with GABRA1. Interacts with NLGN2; leading to mutual regulation of protein level and synaptic clustering.

The protein resides in the cell projection. Its subcellular location is the dendrite. The protein localises to the postsynaptic cell membrane. In terms of biological role, plays a role in the regulation of inhibitory synapse formation and function by being involved in maintening gamma-aminobutyric acid receptors (GABAARs) clustering and their associated scaffold proteins at inhibitory synaptic sites. Acts in concert with NLGN2 to recruit or stabilize GABAARs. The sequence is that of LHFPL tetraspan subfamily member 4 protein from Bos taurus (Bovine).